A 176-amino-acid chain; its full sequence is Woronin body major protein (176 aa).

Residues 1–16 (MGYYDDDAHGHVEADA) constitute a propeptide that is removed on maturation. Residues 1–16 (MGYYDDDAHGHVEADA) are compositionally biased toward basic and acidic residues. The tract at residues 1-31 (MGYYDDDAHGHVEADAAPRATTGTGTGSASQ) is disordered. The Microbody targeting signal signature appears at 174 to 176 (SRL).

This sequence belongs to the eIF-5A family. Hex1 subfamily. Forms oligomers. Self-assembles into hexagonal rods.

It is found in the cell septum. Major component of Woronin bodies, fungal-specific organelles that occlude septal pores in order to separate intact from damaged compartments. Hex-1 binds directly or indirectly to the Woronin body tether that in turn is anchored at the rim of the septal pore. The sequence is that of Woronin body major protein from Neurospora crassa (strain ATCC 24698 / 74-OR23-1A / CBS 708.71 / DSM 1257 / FGSC 987).